We begin with the raw amino-acid sequence, 581 residues long: 2-succinyl-5-enolpyruvyl-6-hydroxy-3-cyclohexene-1-carboxylate synthase (581 aa).

The protein belongs to the TPP enzyme family. MenD subfamily. In terms of assembly, homodimer. Mg(2+) is required as a cofactor. Mn(2+) serves as cofactor. Requires thiamine diphosphate as cofactor.

The enzyme catalyses isochorismate + 2-oxoglutarate + H(+) = 5-enolpyruvoyl-6-hydroxy-2-succinyl-cyclohex-3-ene-1-carboxylate + CO2. Its pathway is quinol/quinone metabolism; 1,4-dihydroxy-2-naphthoate biosynthesis; 1,4-dihydroxy-2-naphthoate from chorismate: step 2/7. It participates in quinol/quinone metabolism; menaquinone biosynthesis. In terms of biological role, catalyzes the thiamine diphosphate-dependent decarboxylation of 2-oxoglutarate and the subsequent addition of the resulting succinic semialdehyde-thiamine pyrophosphate anion to isochorismate to yield 2-succinyl-5-enolpyruvyl-6-hydroxy-3-cyclohexene-1-carboxylate (SEPHCHC). In Psychromonas ingrahamii (strain DSM 17664 / CCUG 51855 / 37), this protein is 2-succinyl-5-enolpyruvyl-6-hydroxy-3-cyclohexene-1-carboxylate synthase.